The primary structure comprises 31 residues: Dermaseptin-7.1TR (31 aa).

At Q31 the chain carries Glutamine amide.

As to expression, expressed by the skin glands.

It is found in the secreted. Functionally, has antimicrobial activity. In Phyllomedusa trinitatis (Trinidad leaf frog), this protein is Dermaseptin-7.1TR.